Consider the following 447-residue polypeptide: Putative bacteriocin-SkfA transport system permease protein SkfF (447 aa).

Topologically, residues Met-1–Phe-3 are cytoplasmic. A helical transmembrane segment spans residues Leu-4 to Arg-22. Residues Ser-23–Ser-29 are Extracellular-facing. A helical transmembrane segment spans residues Ile-30–Asn-50. The Cytoplasmic segment spans residues Arg-51–Ile-59. The helical transmembrane segment at Ile-60–Ser-80 threads the bilayer. Residues Val-81–Ala-85 are Extracellular-facing. Residues Leu-86–Gly-104 form a helical membrane-spanning segment. Topologically, residues Asp-105–Ser-113 are cytoplasmic. A helical transmembrane segment spans residues Ile-114 to Arg-134. The Extracellular portion of the chain corresponds to Thr-135–Arg-141. A helical membrane pass occupies residues Val-142 to Arg-160. The Cytoplasmic segment spans residues Phe-161–Ser-189. A helical membrane pass occupies residues Pro-190 to Ala-208. Residues Phe-209–Thr-247 are Extracellular-facing. The helical transmembrane segment at Trp-248–Phe-268 threads the bilayer. Residues Lys-269–Phe-297 are Cytoplasmic-facing. A helical membrane pass occupies residues Tyr-298–Val-318. Residues Arg-319 to Glu-341 lie on the Extracellular side of the membrane. The chain crosses the membrane as a helical span at residues Leu-342–Ala-360. Residues Val-361–Asn-363 lie on the Cytoplasmic side of the membrane. A helical transmembrane segment spans residues Leu-364–Arg-382. Residues Leu-383–Ser-404 are Extracellular-facing. The chain crosses the membrane as a helical span at residues Phe-405–Thr-423. Topologically, residues Ala-424 to Trp-426 are cytoplasmic. A helical transmembrane segment spans residues Tyr-427 to Arg-447.

It is found in the cell membrane. Probably part of the ABC transporter SkfEF involved in the export of the bacteriocin SKF. Probably responsible for the translocation of bacteriocin SkfA across the membrane. In Bacillus subtilis (strain 168), this protein is Putative bacteriocin-SkfA transport system permease protein SkfF.